We begin with the raw amino-acid sequence, 364 residues long: Nuclear hormone receptor family member nhr-53 (364 aa).

The segment at residues 20–95 (PSYCLICCEV…VGMQRSSVQQ (76 aa)) is a DNA-binding region (nuclear receptor). NR C4-type zinc fingers lie at residues 23–43 (CLICCEVADGHHFGAAACRAC) and 59–83 (CPKNGQCFILSNVRNMCRACRYEKC). One can recognise an NR LBD domain in the interval 110 to 363 (REEPVLDTMR…KNLYDMFSPT (254 aa)).

It belongs to the nuclear hormone receptor family.

The protein resides in the nucleus. Orphan nuclear receptor. The chain is Nuclear hormone receptor family member nhr-53 (nhr-53) from Caenorhabditis elegans.